The primary structure comprises 573 residues: Splicing factor U2af large subunit A (573 aa).

Positions 1–175 are disordered; it reads MSEFEDHEGN…KSKQRVSGFD (175 aa). A compositionally biased stretch (basic and acidic residues) spans 22–93; sequence NGGRDGEIED…ERSRDKDRDH (72 aa). Over residues 94-105 the composition is skewed to basic residues; that stretch reads RERHHRSSRHRD. Over residues 106–141 the composition is skewed to basic and acidic residues; sequence HSRERGERRERGGRDDDDYRRSRDRDHDRRRDDRGG. Over residues 159–169 the composition is skewed to basic residues; it reads TRSRSPSKSKQ. RRM domains are found at residues 239–322, 359–437, and 478–564; these read RRVY…RPSD, DRIF…RANQ, and QVVT…YPED.

It belongs to the splicing factor SR family. In terms of assembly, component of the spliceosome. Interacts with SUA. Interacts with SF1 in the nucleus.

It localises to the nucleus. Functionally, necessary for the splicing of pre-mRNA. The chain is Splicing factor U2af large subunit A from Arabidopsis thaliana (Mouse-ear cress).